A 208-amino-acid polypeptide reads, in one-letter code: Mediator of RNA polymerase II transcription subunit 18 (208 aa).

Serine 66 carries the phosphoserine modification.

It belongs to the Mediator complex subunit 18 family. In terms of assembly, component of the Mediator complex, which is composed of MED1, MED4, MED6, MED7, MED8, MED9, MED10, MED11, MED12, MED13, MED13L, MED14, MED15, MED16, MED17, MED18, MED19, MED20, MED21, MED22, MED23, MED24, MED25, MED26, MED27, MED29, MED30, MED31, CCNC, CDK8 and CDC2L6/CDK11. The MED12, MED13, CCNC and CDK8 subunits form a distinct module termed the CDK8 module. Mediator containing the CDK8 module is less active than Mediator lacking this module in supporting transcriptional activation. Individual preparations of the Mediator complex lacking one or more distinct subunits have been variously termed ARC, CRSP, DRIP, PC2, SMCC and TRAP.

Its subcellular location is the nucleus. Functionally, component of the Mediator complex, a coactivator involved in the regulated transcription of nearly all RNA polymerase II-dependent genes. Mediator functions as a bridge to convey information from gene-specific regulatory proteins to the basal RNA polymerase II transcription machinery. Mediator is recruited to promoters by direct interactions with regulatory proteins and serves as a scaffold for the assembly of a functional preinitiation complex with RNA polymerase II and the general transcription factors. The sequence is that of Mediator of RNA polymerase II transcription subunit 18 (MED18) from Homo sapiens (Human).